We begin with the raw amino-acid sequence, 358 residues long: Valine dehydrogenase (358 aa).

Lys88 is a catalytic residue. 188–194 (GVGKVGH) lines the NAD(+) pocket.

It belongs to the Glu/Leu/Phe/Val dehydrogenases family. As to quaternary structure, homodimer.

The protein resides in the cytoplasm. It carries out the reaction L-valine + NAD(+) + H2O = 3-methyl-2-oxobutanoate + NH4(+) + NADH + H(+). Its pathway is amino-acid degradation; L-valine degradation. In terms of biological role, oxidative deamination of branched-chain amino acids. The catabolism of valine is the major source of fatty acid precursors for macrolide biosynthesis and a vital source of antibiotic precursors. The chain is Valine dehydrogenase (vdh) from Streptomyces virginiae (Streptomyces cinnamonensis).